Reading from the N-terminus, the 634-residue chain is MMKEFNPREIEKKWQKRWEEAGVFKAQEGKPNKFYVLEMFPYPSGRIHMGHVRNYTIGDAIARYLKMRGKNILHPMGWDAFGLPAENAAIKHGIHPAKWTYENIDYMKKQLKILGFSYDWDREIATCDPEYYKWNQWIFLKMLERGIAYRKTAKVNWCPHDQTVLANEQVIEGKCWRCGTPIVQKEVPSWFLRITAYADRLLEDLKKLEGKWPERVIAQQRNWIGRSEGALIRFYVEIEEPEKFLNCVPEELKETLLKEKRIYIDVFTTRPDTVFGATFVVLAPEHPLVPVLACIGERLGNACYSDVENFVEKMKKMSTRERTMEEDKEGVFLGVYATNPANGEKIPVWSANYVLYEYGTGAIMCVPAHDQRDWEFAKKYDLPIKVVVKPEGAWDFEKGAYEGKGTLVNSDGFDGLDSETAKRKITEWLQDRGLGEKKVSYRLRDWNISRQRYWGTPIPVVYCEKCGMVPVPEDQLPVKLPLDVKFTGQGNPLETSEEFVNTTCPKCGGKARRETDTMDTFFDSSWYFLRFCDPKNDREPFSREKVDYWMPVDVYIGGIEHAVLHLLYARFFQKFLKDLGLVRDDEPFEKLITQGMVLKKWVSVKKLLDYLGLSEEDEVEELKKRLEELGARRA.

The short motif at 43–51 (PSGRIHMGH) is the 'HIGH' region element.

It belongs to the class-I aminoacyl-tRNA synthetase family. As to quaternary structure, seems to consist of an alpha chain and a beta chain.

Its subcellular location is the cytoplasm. It catalyses the reaction tRNA(Leu) + L-leucine + ATP = L-leucyl-tRNA(Leu) + AMP + diphosphate. In Aquifex aeolicus (strain VF5), this protein is Leucine--tRNA ligase subunit alpha (leuS).